The primary structure comprises 150 residues: Arginine repressor (150 aa).

It belongs to the ArgR family.

The protein localises to the cytoplasm. Its pathway is amino-acid biosynthesis; L-arginine biosynthesis [regulation]. Its function is as follows. Regulates arginine biosynthesis genes. This is Arginine repressor from Clostridium beijerinckii (strain ATCC 51743 / NCIMB 8052) (Clostridium acetobutylicum).